The sequence spans 268 residues: Xyloglucan endotransglucosylase protein 7 (268 aa).

Residues 1 to 196 (MNAEGGNLHR…WTKAPFTASY (196 aa)) enclose the GH16 domain. Glutamate 82 (nucleophile) is an active-site residue. Residue glutamate 86 is the Proton donor of the active site. Glutamate 86 is a xyloglucan binding site. Asparagine 90 carries an N-linked (GlcNAc...) asparagine glycan. Residues 99-101 (HTN), 109-111 (NRE), 175-176 (DW), and glycine 180 each bind xyloglucan. 2 disulfide bridges follow: cysteine 204–cysteine 213 and cysteine 251–cysteine 265. Arginine 256 is a xyloglucan binding site.

Belongs to the glycosyl hydrolase 16 family. XTH group 2 subfamily. Post-translationally, contains at least one intrachain disulfide bond essential for its enzymatic activity. Expressed at a very high level in flowers and stems (picked at anthesis), and at a lower level in ripe leaves and fruits.

It is found in the cytoplasm. The catalysed reaction is breaks a beta-(1-&gt;4) bond in the backbone of a xyloglucan and transfers the xyloglucanyl segment on to O-4 of the non-reducing terminal glucose residue of an acceptor, which can be a xyloglucan or an oligosaccharide of xyloglucan.. Functionally, catalyzes xyloglucan endotransglycosylation (XET). Cleaves and religates xyloglucan polymers. Does not catalyze xyloglucan endohydrolysis (XEH). Probably involved in cell wall assembly and synthesis in fast growing tissues and in the maintenance of firmness in mature fruits. In Diospyros kaki (Kaki persimmon), this protein is Xyloglucan endotransglucosylase protein 7.